The chain runs to 374 residues: Queuine tRNA-ribosyltransferase (374 aa).

Asp89 (proton acceptor) is an active-site residue. Substrate is bound by residues 89-93 (DSGGF), Asp143, Gln187, and Gly214. An RNA binding region spans residues 245-251 (GVGKPED). Residue Asp264 is the Nucleophile of the active site. Residues 269–273 (TRNAR) are RNA binding; important for wobble base 34 recognition. The Zn(2+) site is built by Cys302, Cys304, Cys307, and His333.

It belongs to the queuine tRNA-ribosyltransferase family. Homodimer. Within each dimer, one monomer is responsible for RNA recognition and catalysis, while the other monomer binds to the replacement base PreQ1. Requires Zn(2+) as cofactor.

It catalyses the reaction 7-aminomethyl-7-carbaguanine + guanosine(34) in tRNA = 7-aminomethyl-7-carbaguanosine(34) in tRNA + guanine. The protein operates within tRNA modification; tRNA-queuosine biosynthesis. Functionally, catalyzes the base-exchange of a guanine (G) residue with the queuine precursor 7-aminomethyl-7-deazaguanine (PreQ1) at position 34 (anticodon wobble position) in tRNAs with GU(N) anticodons (tRNA-Asp, -Asn, -His and -Tyr). Catalysis occurs through a double-displacement mechanism. The nucleophile active site attacks the C1' of nucleotide 34 to detach the guanine base from the RNA, forming a covalent enzyme-RNA intermediate. The proton acceptor active site deprotonates the incoming PreQ1, allowing a nucleophilic attack on the C1' of the ribose to form the product. After dissociation, two additional enzymatic reactions on the tRNA convert PreQ1 to queuine (Q), resulting in the hypermodified nucleoside queuosine (7-(((4,5-cis-dihydroxy-2-cyclopenten-1-yl)amino)methyl)-7-deazaguanosine). This is Queuine tRNA-ribosyltransferase from Shewanella oneidensis (strain ATCC 700550 / JCM 31522 / CIP 106686 / LMG 19005 / NCIMB 14063 / MR-1).